A 159-amino-acid polypeptide reads, in one-letter code: RNA pyrophosphohydrolase (159 aa).

The Nudix hydrolase domain occupies 6–149 (GFRPNVGIIL…KREVYRRALK (144 aa)). The short motif at 38–59 (GGINDRESPEEALYRELNEEVG) is the Nudix box element.

Belongs to the Nudix hydrolase family. RppH subfamily. The cofactor is a divalent metal cation.

Functionally, accelerates the degradation of transcripts by removing pyrophosphate from the 5'-end of triphosphorylated RNA, leading to a more labile monophosphorylated state that can stimulate subsequent ribonuclease cleavage. The sequence is that of RNA pyrophosphohydrolase from Ectopseudomonas mendocina (strain ymp) (Pseudomonas mendocina).